The sequence spans 498 residues: Calcitonin receptor (498 aa).

Residues 1–29 (MRFTLTRWCLTLFIFLNRPLPVLPDSADG) form the signal peptide. Topologically, residues 30-147 (AHTPTLEPEP…FTPDKLQNAY (118 aa)) are extracellular. Intrachain disulfides connect Cys-56-Cys-82, Cys-73-Cys-113, and Cys-96-Cys-135. Asn-74, Asn-126, and Asn-131 each carry an N-linked (GlcNAc...) asparagine glycan. Residues 148 to 170 (ILYYLAIVGHSLSILTLLISLGI) form a helical membrane-spanning segment. Topologically, residues 171 to 198 (FMFLRYFNLLAPFNALLYPTRSISCQRV) are cytoplasmic. A helical membrane pass occupies residues 199-219 (TLHKNMFLTYVLNSIIIIVHL). At 220 to 236 (VVIVPNGELVKRDPPIC) the chain is on the extracellular side. Cys-236 and Cys-306 are oxidised to a cystine. The helical transmembrane segment at 237–259 (KVLHFFHQYMMSCNYFWMLCEGV) threads the bilayer. The Cytoplasmic segment spans residues 260–276 (YLHTLIVVSVFAEGQRL). The helical transmembrane segment at 277–297 (WWYHVLGWGFPLIPTTAHAIT) threads the bilayer. At 298 to 313 (RAVLFNDNCWLSVDTN) the chain is on the extracellular side. A helical membrane pass occupies residues 314 to 337 (LLYIIHGPVMAALVVNFFFLLNIL). Topologically, residues 338-357 (RVLVKKLKESQEAESHMYLK) are cytoplasmic. Residues 358–376 (AVRATLILVPLLGVQFVVL) traverse the membrane as a helical segment. Topologically, residues 377–384 (PWRPSTPL) are extracellular. Residues 385 to 411 (LGKIYDYVVHSLIHFQGFFVAIIYCFC) traverse the membrane as a helical segment. The Cytoplasmic portion of the chain corresponds to 412-498 (NHEVQGALKR…MEVLEQETSA (87 aa)).

It belongs to the G-protein coupled receptor 2 family. Heterodimer of CALCR and RAMP1, RAMP2 or RAMP3; the receptor complexes function as AMYR1, AMYR2 and AMYR3 receptors, respectively, and respond to amylin/IAPP, calcitonin/CT and CGRP1 ligands. Interacts with GPRASP2.

It localises to the cell membrane. G protein-coupled receptor activated by ligand peptides amylin (IAPP), calcitonin (CT/CALCA) and calcitonin gene-related peptide type 1 (CGRP1/CALCA). CALCR interacts with receptor-activity-modifying proteins RAMP1, 2 and 3 to form receptor complexes AMYR1, 2 and 3, respectively. IAPP, CT and CGRP1 activate CALCR and AMYRs with distinct modes of receptor activation resulting in specific phenotypes. Ligand binding causes a conformation change that triggers signaling via guanine nucleotide-binding proteins (G proteins) and modulates the activity of downstream effectors. Activates cAMP-dependent pathway. This chain is Calcitonin receptor, found in Sus scrofa (Pig).